The primary structure comprises 847 residues: Glucans biosynthesis glucosyltransferase H (847 aa).

At 1–138 the chain is on the cytoplasmic side; the sequence is MNKTTEYIDA…KWRTVGTIRR (138 aa). Residues 139-156 traverse the membrane as a helical segment; that stretch reads YILLILTLAQTVVATWYM. At 157-193 the chain is on the periplasmic side; sequence KTILPYQGWALINPMDMVGQDIWVSFMQLLPYMLQTG. A helical transmembrane segment spans residues 194–216; sequence ILILFAVLFCWVSAGFWTALMGF. Residues 217–511 lie on the Cytoplasmic side of the membrane; sequence LQLLIGRDKY…LVKGMHPVHR (295 aa). The helical transmembrane segment at 512–534 threads the bilayer; sequence AVFLTGVMSYLSAPLWFMFLALS. Residues 535 to 567 are Periplasmic-facing; sequence TALQVVHALTEPQYFLQPRQLFPVWPQWRPELA. The helical transmembrane segment at 568–590 threads the bilayer; that stretch reads IALFASTMVLLFLPKLLSIMLIW. The Cytoplasmic segment spans residues 591–602; that stretch reads CKGTKEYGGFWR. A helical transmembrane segment spans residues 603-625; sequence VTLSLLLEVLFSVLLAPVRMLFH. Topologically, residues 626-679 are periplasmic; it reads TVFVVSAFLGWEVVWNSPQRDDDSTPWGEAFMRHGSQLLLGLVWAVGMAWLDLR. A helical membrane pass occupies residues 680-702; it reads FLFWLAPIVFSLILSPFVSVISS. At 703-847 the chain is on the cytoplasmic side; it reads RSTVGLRTKR…ALQGRTSSAR (145 aa).

The protein belongs to the glycosyltransferase 2 family. OpgH subfamily.

The protein resides in the cell inner membrane. Its pathway is glycan metabolism; osmoregulated periplasmic glucan (OPG) biosynthesis. Functionally, involved in the biosynthesis of osmoregulated periplasmic glucans (OPGs). The polypeptide is Glucans biosynthesis glucosyltransferase H (Salmonella typhimurium (strain LT2 / SGSC1412 / ATCC 700720)).